A 424-amino-acid chain; its full sequence is STAM-binding protein (424 aa).

The segment at 1–127 (MSDHGDVSLP…YEQYKERKKK (127 aa)) is interaction with CHMP3. Phosphoserine is present on residues serine 2 and serine 48. The segment at 227-231 (PAKPP) is interaction with STAM. A Phosphoserine modification is found at serine 243. The region spanning 257–388 (IVVPRNLCSE…LTDYGLQEIS (132 aa)) is the MPN domain. Histidine 335, histidine 337, aspartate 348, histidine 350, cysteine 390, histidine 396, and histidine 398 together coordinate Zn(2+). The JAMM motif motif lies at 335 to 348 (HTHPTQTAFLSSVD).

It belongs to the peptidase M67C family. Interacts with STAM. Interacts with SMAD6 and SMAD7. Interacts with CHMP3; the interaction appears to relieve the autoinhibition of CHMP3. Interacts with SMURF2 and RNF11; this interaction promotes ubiquitination. Zn(2+) is required as a cofactor. Post-translationally, phosphorylated after BMP type I receptor activation. Ubiquitinated by SMURF2 in the presence of RNF11. In terms of tissue distribution, expressed in brain.

The protein localises to the nucleus. It localises to the membrane. Its subcellular location is the cytoplasm. The protein resides in the early endosome. With respect to regulation, inhibited by N-ethylmaleimide. Its function is as follows. Zinc metalloprotease that specifically cleaves 'Lys-63'-linked polyubiquitin chains. Does not cleave 'Lys-48'-linked polyubiquitin chains. Plays a role in signal transduction for cell growth and MYC induction mediated by IL-2 and GM-CSF. Potentiates BMP (bone morphogenetic protein) signaling by antagonizing the inhibitory action of SMAD6 and SMAD7. Has a key role in regulation of cell surface receptor-mediated endocytosis and ubiquitin-dependent sorting of receptors to lysosomes. Endosomal localization of STAMBP is required for efficient EGFR degradation but not for its internalization. Involved in the negative regulation of PI3K-AKT-mTOR and RAS-MAP signaling pathways. The chain is STAM-binding protein (Stambp) from Mus musculus (Mouse).